Reading from the N-terminus, the 223-residue chain is Phosphoenolpyruvate guanylyltransferase (223 aa).

Phosphoenolpyruvate-binding residues include Thr-140, Gly-156, and Ser-159.

The protein belongs to the CofC family.

The enzyme catalyses phosphoenolpyruvate + GTP + H(+) = enolpyruvoyl-2-diphospho-5'-guanosine + diphosphate. It functions in the pathway cofactor biosynthesis; coenzyme F420 biosynthesis. Functionally, guanylyltransferase that catalyzes the activation of phosphoenolpyruvate (PEP) as enolpyruvoyl-2-diphospho-5'-guanosine, via the condensation of PEP with GTP. It is involved in the biosynthesis of coenzyme F420, a hydride carrier cofactor. In Conexibacter woesei (strain DSM 14684 / CCUG 47730 / CIP 108061 / JCM 11494 / NBRC 100937 / ID131577), this protein is Phosphoenolpyruvate guanylyltransferase.